We begin with the raw amino-acid sequence, 230 residues long: 5'-methylthioadenosine/S-adenosylhomocysteine nucleosidase (230 aa).

The active-site Proton acceptor is the glutamate 12. Residues glycine 78, valine 152, and 173 to 174 (ME) each bind substrate. The active-site Proton donor is the aspartate 197.

Belongs to the PNP/UDP phosphorylase family. MtnN subfamily.

It carries out the reaction S-adenosyl-L-homocysteine + H2O = S-(5-deoxy-D-ribos-5-yl)-L-homocysteine + adenine. The enzyme catalyses S-methyl-5'-thioadenosine + H2O = 5-(methylsulfanyl)-D-ribose + adenine. It catalyses the reaction 5'-deoxyadenosine + H2O = 5-deoxy-D-ribose + adenine. Its pathway is amino-acid biosynthesis; L-methionine biosynthesis via salvage pathway; S-methyl-5-thio-alpha-D-ribose 1-phosphate from S-methyl-5'-thioadenosine (hydrolase route): step 1/2. In terms of biological role, catalyzes the irreversible cleavage of the glycosidic bond in both 5'-methylthioadenosine (MTA) and S-adenosylhomocysteine (SAH/AdoHcy) to adenine and the corresponding thioribose, 5'-methylthioribose and S-ribosylhomocysteine, respectively. Also cleaves 5'-deoxyadenosine, a toxic by-product of radical S-adenosylmethionine (SAM) enzymes, into 5-deoxyribose and adenine. In Glaesserella parasuis serovar 5 (strain SH0165) (Haemophilus parasuis), this protein is 5'-methylthioadenosine/S-adenosylhomocysteine nucleosidase.